Reading from the N-terminus, the 243-residue chain is Small ribosomal subunit protein mS23 (243 aa).

This sequence belongs to the mitochondrion-specific ribosomal protein mS23 family. In terms of assembly, component of the mitochondrial small ribosomal subunit.

The protein resides in the mitochondrion. The protein is Small ribosomal subunit protein mS23 (rsm25) of Emericella nidulans (strain FGSC A4 / ATCC 38163 / CBS 112.46 / NRRL 194 / M139) (Aspergillus nidulans).